Here is a 305-residue protein sequence, read N- to C-terminus: Probable GTP 3',8-cyclase (305 aa).

Residues Arg-6–Asp-233 form the Radical SAM core domain. GTP is bound at residue Arg-15. [4Fe-4S] cluster is bound by residues Cys-22 and Cys-26. Tyr-28 provides a ligand contact to S-adenosyl-L-methionine. Cys-29 is a [4Fe-4S] cluster binding site. Position 62 (Arg-62) interacts with GTP. Gly-66 serves as a coordination point for S-adenosyl-L-methionine. A GTP-binding site is contributed by Thr-92. Ser-116 serves as a coordination point for S-adenosyl-L-methionine. Lys-153 provides a ligand contact to GTP. Residues Cys-249 and Cys-252 each contribute to the [4Fe-4S] cluster site. Arg-254–Arg-256 is a binding site for GTP. Residue Cys-266 participates in [4Fe-4S] cluster binding.

It belongs to the radical SAM superfamily. MoaA family. Requires [4Fe-4S] cluster as cofactor.

The enzyme catalyses GTP + AH2 + S-adenosyl-L-methionine = (8S)-3',8-cyclo-7,8-dihydroguanosine 5'-triphosphate + 5'-deoxyadenosine + L-methionine + A + H(+). Its pathway is cofactor biosynthesis; molybdopterin biosynthesis. Catalyzes the cyclization of GTP to (8S)-3',8-cyclo-7,8-dihydroguanosine 5'-triphosphate. The sequence is that of Probable GTP 3',8-cyclase from Methanothermobacter thermautotrophicus (strain ATCC 29096 / DSM 1053 / JCM 10044 / NBRC 100330 / Delta H) (Methanobacterium thermoautotrophicum).